A 404-amino-acid polypeptide reads, in one-letter code: MKDKIKTKILSPFLYFLKSESSSGIILLICAIAAIMIANSSFSGGYEHIFHTNITIGYGVFSLSMSVLHWINDGLMAIFFLVVGMEIKREVVFGELKSFKRTILPISAAIGGMIVPAIIYALFNYKEPTITGWGIPMATDIAFALGMLSLVAKNAPKGIVVFLTALAIVDDLGAIIVIAIFYNSQISWIALLLGLIVFATLILANKFKIKYTSIYIILGIILWICLLKSGIHATIAGVLLGMSLPIGENIHKFKTSILYKLEHILTPWSSFVIMPIFAFANAGIIINTDNFSGSLFSPASLGIIFGLFVGKQIGIFGTSFILIKLKIAKFPSNVTKRHLYGASVFGGIGFTMSIFVSSLSFADANILSEAKMCIMIASILAATYGTIVFKFINFKNEKLNYKQS.

11 helical membrane-spanning segments follow: residues 24-44 (GIIL…SFSG), 67-87 (VLHW…GMEI), 103-123 (ILPI…YALF), 132-152 (GWGI…SLVA), 161-181 (VFLT…IAIF), 184-204 (SQIS…LILA), 216-236 (IILG…ATIA), 266-286 (TPWS…GIII), 303-323 (IIFG…FILI), 339-359 (LYGA…VSSL), and 372-392 (MCIM…FKFI).

This sequence belongs to the NhaA Na(+)/H(+) (TC 2.A.33) antiporter family.

The protein localises to the cell membrane. It carries out the reaction Na(+)(in) + 2 H(+)(out) = Na(+)(out) + 2 H(+)(in). Functionally, na(+)/H(+) antiporter that extrudes sodium in exchange for external protons. The sequence is that of Na(+)/H(+) antiporter NhaA 2 from Clostridium beijerinckii (strain ATCC 51743 / NCIMB 8052) (Clostridium acetobutylicum).